Here is a 252-residue protein sequence, read N- to C-terminus: Large ribosomal subunit protein uL4 (252 aa).

Belongs to the universal ribosomal protein uL4 family. Part of the 50S ribosomal subunit.

Its function is as follows. One of the primary rRNA binding proteins, this protein initially binds near the 5'-end of the 23S rRNA. It is important during the early stages of 50S assembly. It makes multiple contacts with different domains of the 23S rRNA in the assembled 50S subunit and ribosome. In terms of biological role, forms part of the polypeptide exit tunnel. This chain is Large ribosomal subunit protein uL4, found in Methanococcus aeolicus (strain ATCC BAA-1280 / DSM 17508 / OCM 812 / Nankai-3).